The chain runs to 343 residues: MAAEEEDEVEWVVESIAGFLRGPDWSIPILDFVEQKCEVFDDEEESKLTYTEIHQEYKELVEKLLESYLKEIGINEDQFQEACTSPLAKTRTSQAILQPVLAAEDFTIFKAMMVQKNIEMQLQAIRIIQERNGVLPDCLTDGADVVSDLEQEEMKILREVLRKSKEEYDQEEERKRKKQSSEGKMEEPPIYTSETAKLTNSQGDGEHFVQPSSEVKVHFTNQSVQPLARKMELLPETSSLTQKGLKIPGLEHASMEGPIANLSALGTEELRQREHYLKQKRDKLMSMRKDMRAKQIQNTEQKGKPTREAEEMTEKPEMTAEEKQTLLKRRLLAEKLKEEVINK.

Residues serine 85 and serine 147 each carry the phosphoserine modification. The stretch at 147-181 forms a coiled coil; it reads SDLEQEEMKILREVLRKSKEEYDQEEERKRKKQSS. The segment at 165 to 191 is disordered; sequence KEEYDQEEERKRKKQSSEGKMEEPPIY. Serine 201 carries the phosphoserine modification. Residues 286–323 are disordered; that stretch reads SMRKDMRAKQIQNTEQKGKPTREAEEMTEKPEMTAEEK. Positions 301–323 are enriched in basic and acidic residues; the sequence is QKGKPTREAEEMTEKPEMTAEEK.

It belongs to the CFAP36 family. In terms of assembly, interacts with ARL3. As to expression, widely expressed (at protein level).

It localises to the nucleus. The protein resides in the cytoplasm. Its subcellular location is the cell projection. It is found in the cilium. The protein localises to the flagellum. In terms of biological role, may act as an effector for ARL3. The polypeptide is Cilia- and flagella-associated protein 36 (Rattus norvegicus (Rat)).